A 96-amino-acid polypeptide reads, in one-letter code: Large ribosomal subunit protein bL27 (96 aa).

A propeptide spanning residues 1-9 (MLKFDIQHF) is cleaved from the precursor. Positions 1–33 (MLKFDIQHFAHKKGGGSTSNGRDSESKRLGAKR) are disordered. Positions 22-33 (RDSESKRLGAKR) are enriched in basic and acidic residues.

Belongs to the bacterial ribosomal protein bL27 family. In terms of processing, the N-terminus is cleaved by ribosomal processing cysteine protease Prp.

The polypeptide is Large ribosomal subunit protein bL27 (Listeria innocua serovar 6a (strain ATCC BAA-680 / CLIP 11262)).